The primary structure comprises 234 residues: LexA repressor (234 aa).

Residues 1–29 form a disordered region; sequence MSDAANPEGHKRSLPGRPPGIRADSSGLT. Residues 52-72 constitute a DNA-binding region (H-T-H motif); it reads MREIGQAVGLSSTSSVAHQLM. The segment at 90–109 is disordered; it reads YEVRGSDQAASVQPTDTAGK. Residues S158 and K195 each act as for autocatalytic cleavage activity in the active site.

It belongs to the peptidase S24 family. In terms of assembly, homodimer.

It carries out the reaction Hydrolysis of Ala-|-Gly bond in repressor LexA.. Represses a number of genes involved in the response to DNA damage (SOS response), including recA and lexA. In the presence of single-stranded DNA, RecA interacts with LexA causing an autocatalytic cleavage which disrupts the DNA-binding part of LexA, leading to derepression of the SOS regulon and eventually DNA repair. The polypeptide is LexA repressor (Streptomyces coelicolor (strain ATCC BAA-471 / A3(2) / M145)).